The primary structure comprises 61 residues: Protein A40 homolog (61 aa).

Topologically, residues 1 to 11 are cytoplasmic; it reads MTMNKPKTNYA. Residues 12–32 form a helical; Signal-anchor for type II membrane protein membrane-spanning segment; the sequence is GYACCVICGLIVGIIFTATLL. At 33–61 the chain is on the extracellular side; the sequence is KAVERKLIHTPLIDKTIKDAYIREDCPTD.

This sequence belongs to the poxviridae A40 protein family.

The protein resides in the host membrane. The sequence is that of Protein A40 homolog (A45R) from Homo sapiens (Human).